The primary structure comprises 302 residues: Ribosomal protein L11 methyltransferase (302 aa).

Positions 148, 169, 191, and 237 each coordinate S-adenosyl-L-methionine.

It belongs to the methyltransferase superfamily. PrmA family.

The protein localises to the cytoplasm. It catalyses the reaction L-lysyl-[protein] + 3 S-adenosyl-L-methionine = N(6),N(6),N(6)-trimethyl-L-lysyl-[protein] + 3 S-adenosyl-L-homocysteine + 3 H(+). Functionally, methylates ribosomal protein L11. The protein is Ribosomal protein L11 methyltransferase of Desulfosudis oleivorans (strain DSM 6200 / JCM 39069 / Hxd3) (Desulfococcus oleovorans).